Reading from the N-terminus, the 137-residue chain is Protein MGF 110-7L (137 aa).

Residues 1–20 (MLVIILGIIGLLASSNLVSS) form the signal peptide. 3 N-linked (GlcNAc...) asparagine; by host glycosylation sites follow: N69, N70, and N105.

Belongs to the asfivirus MGF 110 family.

Its function is as follows. Plays a role in virus cell tropism, and may be required for efficient virus replication in macrophages. This chain is Protein MGF 110-7L, found in African swine fever virus (isolate Tick/South Africa/Pretoriuskop Pr4/1996) (ASFV).